Reading from the N-terminus, the 261-residue chain is NAD-capped RNA hydrolase NudC (261 aa).

R69 is a binding site for substrate. C98 and C101 together coordinate Zn(2+). E111 serves as a coordination point for substrate. Positions 116 and 119 each coordinate Zn(2+). Y124 serves as a coordination point for substrate. One can recognise a Nudix hydrolase domain in the interval 125 to 248 (PQIAPCIIVA…TVARRLIEDT (124 aa)). Positions 158, 174, and 178 each coordinate a divalent metal cation. The Nudix box motif lies at 159–180 (GFVEVGETLEQTVAREVMEESS). 192 to 199 (QPWPFPQS) serves as a coordination point for substrate. E219 contributes to the a divalent metal cation binding site. Position 241 (A241) interacts with substrate.

This sequence belongs to the Nudix hydrolase family. NudC subfamily. In terms of assembly, homodimer. The cofactor is Mg(2+). Mn(2+) serves as cofactor. Zn(2+) is required as a cofactor.

The enzyme catalyses a 5'-end NAD(+)-phospho-ribonucleoside in mRNA + H2O = a 5'-end phospho-adenosine-phospho-ribonucleoside in mRNA + beta-nicotinamide D-ribonucleotide + 2 H(+). It carries out the reaction NAD(+) + H2O = beta-nicotinamide D-ribonucleotide + AMP + 2 H(+). The catalysed reaction is NADH + H2O = reduced beta-nicotinamide D-ribonucleotide + AMP + 2 H(+). In terms of biological role, mRNA decapping enzyme that specifically removes the nicotinamide adenine dinucleotide (NAD) cap from a subset of mRNAs by hydrolyzing the diphosphate linkage to produce nicotinamide mononucleotide (NMN) and 5' monophosphate mRNA. The NAD-cap is present at the 5'-end of some mRNAs and stabilizes RNA against 5'-processing. Has preference for mRNAs with a 5'-end purine. Catalyzes the hydrolysis of a broad range of dinucleotide pyrophosphates. In Erwinia tasmaniensis (strain DSM 17950 / CFBP 7177 / CIP 109463 / NCPPB 4357 / Et1/99), this protein is NAD-capped RNA hydrolase NudC.